The chain runs to 296 residues: Thioredoxin-related transmembrane protein 2 (296 aa).

The first 48 residues, 1–48, serve as a signal peptide directing secretion; the sequence is MAVLAPLIALVYSVPRLSRWLAQPYYLLSALLSAAFLLVRKLPPLCHG. Residues 49-102 lie on the Extracellular side of the membrane; that stretch reads LPTQREDGNPCDFDWREVEILMFLSAIVMMKNRRSITVEQHIGNIFMFSKVANA. The helical transmembrane segment at 103–125 threads the bilayer; that stretch reads ILFFRLDIRMGLLYITLCIVFLM. Positions 114–270 constitute a Thioredoxin domain; it reads LLYITLCIVF…YQRAKKPSKA (157 aa). Over 126–296 the chain is Cytoplasmic; it reads TCEPPLYMGP…VSDGENKKDK (171 aa). 3 positions are modified to phosphoserine: serine 211, serine 243, and serine 288. The tract at residues 266-296 is disordered; that stretch reads KPSKAGDSIPEEQPVASAPTTVSDGENKKDK. The Di-lysine motif signature appears at 293 to 296; sequence KKDK.

In terms of assembly, monomer. Homodimer; disulfide-linked. Occurs in both reduced and oxidized monomeric form. Oxidative conditions increase homodimerization. Interacts with CANX. Interacts with ATP2A2.

The protein resides in the endoplasmic reticulum membrane. The protein localises to the mitochondrion membrane. Endoplasmic reticulum and mitochondria-associated protein that probably functions as a regulator of cellular redox state and thereby regulates protein post-translational modification, protein folding and mitochondrial activity. Indirectly regulates neuronal proliferation, migration, and organization in the developing brain. This chain is Thioredoxin-related transmembrane protein 2 (TMX2), found in Pongo abelii (Sumatran orangutan).